Consider the following 360-residue polypeptide: MTATLERRESASLWARFCTWITMNENRLYIGWFGVVMIPTLLTATSVFIIACFAAPPVDIDGIREPVAGSLLYGNNIISGAIIPSSAAIGIHFYPIWEAASLDEWLYNGGPYQLIVLHFLLGVCCYIGREWEFSYRLGMRPWISVAFTAPVVAASAVFLVYPIGQGSFSDGMPLGISGTFNFMLVFQAEHNILMHPLHQLGVAGVFGGSLFSAMHGSLVTSSLIRETTENESANNGYKFGQEEETYNIVAAHGYFGRLIFQYASFNNSRSLHFFLGLWPVVGIWFTSMSVSTMAFNLNGFNFNQSVVDSQGRVINTWADILNRANLGMEVMHERNAHNFPLDLASNESLPLALVAPAING.

Helical transmembrane passes span Tyr29–Ser46, His118–Phe133, and Trp142–Ala156. His118 is a chlorophyll a binding site. Tyr126 lines the pheophytin a pocket. The [CaMn4O5] cluster site is built by Asp170 and Glu189. Residues Leu197–Leu218 traverse the membrane as a helical segment. His198 contacts chlorophyll a. A quinone is bound by residues His215 and Ser264 to Phe265. His215 lines the Fe cation pocket. A Fe cation-binding site is contributed by His272. A helical transmembrane segment spans residues Phe274 to Met288. Residues His332, Glu333, Asp342, and Ala344 each coordinate [CaMn4O5] cluster. The propeptide occupies Ser345–Gly360.

It belongs to the reaction center PufL/M/PsbA/D family. In terms of assembly, PSII is composed of 1 copy each of membrane proteins PsbA, PsbB, PsbC, PsbD, PsbE, PsbF, PsbH, PsbI, PsbJ, PsbK, PsbL, PsbM, PsbT, PsbX, PsbY, PsbZ, Psb30/Ycf12, at least 3 peripheral proteins of the oxygen-evolving complex and a large number of cofactors. It forms dimeric complexes. The D1/D2 heterodimer binds P680, chlorophylls that are the primary electron donor of PSII, and subsequent electron acceptors. It shares a non-heme iron and each subunit binds pheophytin, quinone, additional chlorophylls, carotenoids and lipids. D1 provides most of the ligands for the Mn4-Ca-O5 cluster of the oxygen-evolving complex (OEC). There is also a Cl(-1) ion associated with D1 and D2, which is required for oxygen evolution. The PSII complex binds additional chlorophylls, carotenoids and specific lipids. serves as cofactor. Tyr-161 forms a radical intermediate that is referred to as redox-active TyrZ, YZ or Y-Z. Post-translationally, C-terminally processed by CTPA; processing is essential to allow assembly of the oxygen-evolving complex and thus photosynthetic growth.

The protein resides in the plastid. Its subcellular location is the chloroplast thylakoid membrane. The enzyme catalyses 2 a plastoquinone + 4 hnu + 2 H2O = 2 a plastoquinol + O2. Photosystem II (PSII) is a light-driven water:plastoquinone oxidoreductase that uses light energy to abstract electrons from H(2)O, generating O(2) and a proton gradient subsequently used for ATP formation. It consists of a core antenna complex that captures photons, and an electron transfer chain that converts photonic excitation into a charge separation. The D1/D2 (PsbA/PsbD) reaction center heterodimer binds P680, the primary electron donor of PSII as well as several subsequent electron acceptors. The polypeptide is Photosystem II protein D1 (Antithamnion sp. (Red alga)).